The sequence spans 243 residues: Cell surface glycoprotein CD200 receptor 1-B (243 aa).

Over 1 to 29 the chain is Cytoplasmic; that stretch reads MEISQQAGWCKKPASPMNTRAALEAVRNT. A helical; Signal-anchor for type II membrane protein transmembrane segment spans residues 30–47; the sequence is AWTIVLLTSAAVMGASGI. The Ig-like V-type domain maps to 47 to 146; that stretch reads ISRVSANLGH…GNFHYLYHLT (100 aa). Residues 48-243 lie on the Lumenal side of the membrane; that stretch reads SRVSANLGHS…LAQLPGGSAP (196 aa). Disulfide bonds link Cys62–Cys130 and Cys165–Cys214. N-linked (GlcNAc...) asparagine glycans are attached at residues Asn64, Asn67, Asn127, Asn193, Asn222, and Asn228. In terms of domain architecture, Ig-like C2-type spans 144 to 228; sequence HLTVLVAPRM…ATLNETRSIN (85 aa).

This sequence belongs to the CD200R family. As to expression, expressed in peripheral blood lymphocytes (PBL) and peripheral blood mononuclear cells (PBMC).

The protein resides in the membrane. This Gallus gallus (Chicken) protein is Cell surface glycoprotein CD200 receptor 1-B (CD200R1B).